Reading from the N-terminus, the 294-residue chain is Nucleotide-binding protein Smlt1108 (294 aa).

Residue G16 to S23 participates in ATP binding. GTP is bound at residue D69–G72.

It belongs to the RapZ-like family.

Its function is as follows. Displays ATPase and GTPase activities. This chain is Nucleotide-binding protein Smlt1108, found in Stenotrophomonas maltophilia (strain K279a).